Consider the following 293-residue polypeptide: Ribosomal protein L11 methyltransferase (293 aa).

S-adenosyl-L-methionine contacts are provided by Thr145, Gly166, Asp188, and Asn230.

It belongs to the methyltransferase superfamily. PrmA family.

Its subcellular location is the cytoplasm. The enzyme catalyses L-lysyl-[protein] + 3 S-adenosyl-L-methionine = N(6),N(6),N(6)-trimethyl-L-lysyl-[protein] + 3 S-adenosyl-L-homocysteine + 3 H(+). Its function is as follows. Methylates ribosomal protein L11. This chain is Ribosomal protein L11 methyltransferase, found in Escherichia coli O8 (strain IAI1).